Here is a 732-residue protein sequence, read N- to C-terminus: Acetophenone carboxylase gamma subunit (732 aa).

Belongs to the HyuA family. Acetophenone carboxylase consists of five subunits; a heterooctameric subcomplex of two alpha (Apc1), two beta (Apc2), two gamma (Apc3) and two delta (Apc4) subunits assembles with the epsilon (Apc5) subunit in an unknown stoichiometry. The cofactor is Mg(2+). Mn(2+) serves as cofactor.

Its subcellular location is the cytoplasm. It carries out the reaction acetophenone + hydrogencarbonate + 2 ATP + H2O = 3-oxo-3-phenylpropanoate + 2 ADP + 2 phosphate + 2 H(+). With respect to regulation, inhibited by zinc ions, carbamoylphosphate and beta,gamma-imido-ATP. Its function is as follows. Catalyzes the carboxylation of acetophenone to form 3-oxo-3-phenylpropanoate (benzoylacetate) in the anaerobic catabolism of ethylbenzene. Also carboxylates propiophenone at the same rate and 4-acetyl-pyridine at lower rates. This Aromatoleum aromaticum (strain DSM 19018 / LMG 30748 / EbN1) (Azoarcus sp. (strain EbN1)) protein is Acetophenone carboxylase gamma subunit (apc3).